The following is an 81-amino-acid chain: Cytochrome c oxidase subunit NDUFA4 (81 aa).

Residues 1–14 (MLRQIIGQAKKHPS) are Mitochondrial matrix-facing. Position 10 is an N6-acetyllysine (K10). The helical transmembrane segment at 15–37 (LIPLFVFIGTGATGATLYLLRLA) threads the bilayer. Over 38–81 (LFNPDVCWDRNNPEPWNKLGPNDQYKFYSVNVDYSKLKKERPDF) the chain is Mitochondrial intermembrane. At S66 the chain carries Phosphoserine.

The protein belongs to the complex IV NDUFA4 subunit family. Component of the cytochrome c oxidase (complex IV, CIV), a multisubunit enzyme composed of 14 subunits. The complex is composed of a catalytic core of 3 subunits MT-CO1, MT-CO2 and MT-CO3, encoded in the mitochondrial DNA, and 11 supernumerary subunits COX4I1 (or COX4I2), COX5A, COX5B, COX6A1 (or COX6A2), COX6B1 (or COX6B2), COX6C, COX7A2 (or COX7A1), COX7B, COX7C, COX8A and NDUFA4, which are encoded in the nuclear genome. The complex exists as a monomer or a dimer and forms supercomplexes (SCs) in the inner mitochondrial membrane with NADH-ubiquinone oxidoreductase (complex I, CI) and ubiquinol-cytochrome c oxidoreductase (cytochrome b-c1 complex, complex III, CIII), resulting in different assemblies (supercomplex SCI(1)III(2)IV(1) and megacomplex MCI(2)III(2)IV(2)). Interacts with RAB5IF. Interacts with FLVCR2; this interaction occurs in the absence of heme and is disrupted upon heme binding.

The protein localises to the mitochondrion inner membrane. Its function is as follows. Component of the cytochrome c oxidase, the last enzyme in the mitochondrial electron transport chain which drives oxidative phosphorylation. The respiratory chain contains 3 multisubunit complexes succinate dehydrogenase (complex II, CII), ubiquinol-cytochrome c oxidoreductase (cytochrome b-c1 complex, complex III, CIII) and cytochrome c oxidase (complex IV, CIV), that cooperate to transfer electrons derived from NADH and succinate to molecular oxygen, creating an electrochemical gradient over the inner membrane that drives transmembrane transport and the ATP synthase. Cytochrome c oxidase is the component of the respiratory chain that catalyzes the reduction of oxygen to water. Electrons originating from reduced cytochrome c in the intermembrane space (IMS) are transferred via the dinuclear copper A center (CU(A)) of subunit 2 and heme A of subunit 1 to the active site in subunit 1, a binuclear center (BNC) formed by heme A3 and copper B (CU(B)). The BNC reduces molecular oxygen to 2 water molecules unsing 4 electrons from cytochrome c in the IMS and 4 protons from the mitochondrial matrix. NDUFA4 is required for complex IV maintenance. This Homo sapiens (Human) protein is Cytochrome c oxidase subunit NDUFA4 (NDUFA4).